The following is a 555-amino-acid chain: Synaptotagmin-14 (555 aa).

The Extracellular portion of the chain corresponds to 1 to 24; the sequence is MAIEGGERTCGVHELICIRKVSPE. A helical; Signal-anchor for type III membrane protein membrane pass occupies residues 25-47; it reads AVGFLSAVGVFIVLMLLLFLYIN. The Cytoplasmic segment spans residues 48-555; it reads KKFCFENVGG…VCRWHALLES (508 aa). 3 disordered regions span residues 76 to 97, 157 to 179, and 205 to 258; these read YNSY…EALG, TPPL…HLSC, and CPSE…PEPE. The span at 211–224 shows a compositional bias: basic and acidic residues; sequence TGHEAESYHNKGYE. C2 domains lie at 260–379 and 415–550; these read KYGT…SLPV and SVPE…CRWH.

Belongs to the synaptotagmin family. As to quaternary structure, homodimer. Can also form heterodimers. As to expression, expressed in heart and testis. Expressed in brain (especially in the cerebellum).

It localises to the membrane. In terms of biological role, may be involved in the trafficking and exocytosis of secretory vesicles in non-neuronal tissues. Is Ca(2+)-independent. The chain is Synaptotagmin-14 (Syt14) from Mus musculus (Mouse).